The following is a 37-amino-acid chain: Photosystem I reaction center subunit VIII (37 aa).

A helical transmembrane segment spans residues 9–29 (SILVTLVGLVFPAFAMASLFL).

This sequence belongs to the PsaI family.

It is found in the plastid. Its subcellular location is the chloroplast thylakoid membrane. In terms of biological role, may help in the organization of the PsaL subunit. In Pelargonium hortorum (Common geranium), this protein is Photosystem I reaction center subunit VIII.